The sequence spans 217 residues: Deoxyribose-phosphate aldolase (217 aa).

Residue Asp95 is the Proton donor/acceptor of the active site. The active-site Schiff-base intermediate with acetaldehyde is Lys156. Lys184 functions as the Proton donor/acceptor in the catalytic mechanism.

It belongs to the DeoC/FbaB aldolase family. DeoC type 1 subfamily.

The protein localises to the cytoplasm. The catalysed reaction is 2-deoxy-D-ribose 5-phosphate = D-glyceraldehyde 3-phosphate + acetaldehyde. It functions in the pathway carbohydrate degradation; 2-deoxy-D-ribose 1-phosphate degradation; D-glyceraldehyde 3-phosphate and acetaldehyde from 2-deoxy-alpha-D-ribose 1-phosphate: step 2/2. In terms of biological role, catalyzes a reversible aldol reaction between acetaldehyde and D-glyceraldehyde 3-phosphate to generate 2-deoxy-D-ribose 5-phosphate. This is Deoxyribose-phosphate aldolase from Thermosynechococcus vestitus (strain NIES-2133 / IAM M-273 / BP-1).